The chain runs to 212 residues: Uridine kinase (212 aa).

13 to 20 (GASASGKS) contacts ATP.

Belongs to the uridine kinase family.

The protein resides in the cytoplasm. The enzyme catalyses uridine + ATP = UMP + ADP + H(+). The catalysed reaction is cytidine + ATP = CMP + ADP + H(+). The protein operates within pyrimidine metabolism; CTP biosynthesis via salvage pathway; CTP from cytidine: step 1/3. Its pathway is pyrimidine metabolism; UMP biosynthesis via salvage pathway; UMP from uridine: step 1/1. The polypeptide is Uridine kinase (Shewanella frigidimarina (strain NCIMB 400)).